The sequence spans 908 residues: 26S proteasome non-ATPase regulatory subunit 2 (908 aa).

The residue at position 1 (methionine 1) is an N-acetylmethionine. A disordered region spans residues methionine 1–leucine 52. Residues glycine 24–leucine 52 are compositionally biased toward basic and acidic residues. Serine 29 and serine 147 each carry phosphoserine. At tyrosine 194 the chain carries Phosphotyrosine. A phosphoserine mark is found at serine 361 and serine 363. 5 PC repeats span residues serine 409–serine 442, glycine 443–leucine 479, glycine 480–valine 514, valine 517–lysine 551, and leucine 560–serine 589. Lysine 551 is modified (N6-acetyllysine). A compositionally biased stretch (basic and acidic residues) spans lysine 623 to proline 643. Residues lysine 623–aspartate 645 form a disordered region. PC repeat units lie at residues leucine 692–tyrosine 723 and alanine 742–asparagine 757. The required for interaction with UBLCP1 stretch occupies residues aspartate 708–asparagine 903.

Belongs to the proteasome subunit S2 family. In terms of assembly, component of the 19S proteasome regulatory particle complex. The 26S proteasome consists of a 20S core particle (CP) and two 19S regulatory subunits (RP). The regulatory particle is made of a lid composed of 9 subunits, a base containing 6 ATPases and few additional components including PSMD2. Interacts with RPGRIP1L. Interacts with CRY1 in a KDM8-dependent manner. Interacts (via C-terminus) with phosphatase UBLCP1 (via ubiquitin-like domain); the interaction recruits UBLCP1 to the 19S regulatory particle where it dephosphorylates 19S subunit PSMC2/RPT1 which impairs PSMC2 ATPase activity and disrupts 26S proteasome assembly.

Component of the 26S proteasome, a multiprotein complex involved in the ATP-dependent degradation of ubiquitinated proteins. This complex plays a key role in the maintenance of protein homeostasis by removing misfolded or damaged proteins, which could impair cellular functions, and by removing proteins whose functions are no longer required. Therefore, the proteasome participates in numerous cellular processes, including cell cycle progression, apoptosis, or DNA damage repair. In terms of biological role, binds to the intracellular domain of tumor necrosis factor type 1 receptor. The binding domain of TRAP1 and TRAP2 resides outside the death domain of TNFR1. This Bos taurus (Bovine) protein is 26S proteasome non-ATPase regulatory subunit 2 (PSMD2).